A 372-amino-acid chain; its full sequence is DNA replication and repair protein RecF (372 aa).

30–37 (GANGQGKT) provides a ligand contact to ATP.

This sequence belongs to the RecF family.

The protein resides in the cytoplasm. Functionally, the RecF protein is involved in DNA metabolism; it is required for DNA replication and normal SOS inducibility. RecF binds preferentially to single-stranded, linear DNA. It also seems to bind ATP. This chain is DNA replication and repair protein RecF, found in Heliobacterium modesticaldum (strain ATCC 51547 / Ice1).